Reading from the N-terminus, the 220-residue chain is Guanylate kinase (220 aa).

The 180-residue stretch at 11-190 (GVLFVLSSPS…CYGEVMAILR (180 aa)) folds into the Guanylate kinase-like domain. 18-25 (SPSGAGKT) serves as a coordination point for ATP.

This sequence belongs to the guanylate kinase family.

The protein localises to the cytoplasm. It catalyses the reaction GMP + ATP = GDP + ADP. Its function is as follows. Essential for recycling GMP and indirectly, cGMP. The polypeptide is Guanylate kinase (Sphingopyxis alaskensis (strain DSM 13593 / LMG 18877 / RB2256) (Sphingomonas alaskensis)).